The sequence spans 280 residues: Pantothenate synthetase (280 aa).

26-33 contacts ATP; it reads MGNLHEGH. Residue histidine 33 is the Proton donor of the active site. A (R)-pantoate-binding site is contributed by glutamine 57. Glutamine 57 is a binding site for beta-alanine. ATP is bound at residue 145–148; sequence GKKD. Glutamine 151 serves as a coordination point for (R)-pantoate. ATP is bound by residues valine 174 and 182 to 185; that span reads LSSR.

Belongs to the pantothenate synthetase family. Homodimer.

It localises to the cytoplasm. It catalyses the reaction (R)-pantoate + beta-alanine + ATP = (R)-pantothenate + AMP + diphosphate + H(+). It participates in cofactor biosynthesis; (R)-pantothenate biosynthesis; (R)-pantothenate from (R)-pantoate and beta-alanine: step 1/1. In terms of biological role, catalyzes the condensation of pantoate with beta-alanine in an ATP-dependent reaction via a pantoyl-adenylate intermediate. The chain is Pantothenate synthetase from Bordetella avium (strain 197N).